The primary structure comprises 326 residues: Target of rapamycin complex subunit LST8 (326 aa).

Met1 is modified (N-acetylmethionine). WD repeat units follow at residues 1 to 37 (MNTS…CTRT), 40 to 80 (HQDS…PIIS), 83 to 122 (GVNK…LQCQ), 126 to 165 (QVNA…NEQL), and 168 to 207 (EPEV…GDEV). Thr51 bears the Phosphothreonine mark. Lys86 is covalently cross-linked (Glycyl lysine isopeptide (Lys-Gly) (interchain with G-Cter in SUMO3)). Residues Lys215, Lys245, and Lys261 each participate in a glycyl lysine isopeptide (Lys-Gly) (interchain with G-Cter in SUMO3) cross-link. The stretch at 218–257 (AHTRYALQCRFSPDSTLLATCSADQTCKIWRTSNFSLMTE) is one WD 6 repeat. A WD 7 repeat occupies 268–309 (SSRGWMWGCAFSGDSQYIVTASSDNLARLWCVETGEIKREYG). Lys305 participates in a covalent cross-link: Glycyl lysine isopeptide (Lys-Gly) (interchain with G-Cter in SUMO3); alternate. Glycyl lysine isopeptide (Lys-Gly) (interchain with G-Cter in ubiquitin); alternate cross-links involve residues Lys305 and Lys313. Lys313 participates in a covalent cross-link: Glycyl lysine isopeptide (Lys-Gly) (interchain with G-Cter in SUMO1); alternate.

This sequence belongs to the WD repeat LST8 family. In terms of assembly, part of the mechanistic target of rapamycin complex 1 (mTORC1) which contains MTOR, MLST8 and RPTOR. mTORC1 associates with AKT1S1/PRAS40, which inhibits its activity. mTORC1 binds to and is inhibited by FKBP12-rapamycin. Within mTORC1, interacts directly with MTOR and RPTOR. Component of the mechanistic target of rapamycin complex 2 (mTORC2), consisting in two heterotretramers composed of MTOR, MLST8, RICTOR and MAPKAP1/SIN1. Contrary to mTORC1, mTORC2 does not bind to and is not sensitive to FKBP12-rapamycin. mTORC1 and mTORC2 associate with DEPTOR, which regulates their activity. Interacts with RHEB. Interacts with MEAK7. Interacts with SIK3. Interacts with SLC38A7; this interaction promotes the recruitment of mTORC1 to the lysosome and its subsequent activation. Post-translationally, phosphorylation at Thr-51 by CDK1 promotes ubiquitination by the SCF(FBXW7) complex, followed by degradation. Ubiquitination by the SCF(FBXW7) and SCF(FBXW11) complexes following phosphorylation at Thr-51 by CDK1, leads to its degradation by the proteasome. Ubiquitination at Lys-305 and Lys-313 by TRAF2 via 'Lys-63'-linked polyubiquitin chains inhibits formation of the mTORC2 complex, while promoting formation of the mTORC1 complex: ubiquitination disrupts the interaction between MLST8 and MAPKAP1/SIN1 to favor mTORC1 assembly. Deubiquitination at Lys-305 and Lys-313 by OTUD7B promotes MLST8 interaction with MAPKAP1/SIN1, facilitating mTORC2 assembly. In terms of processing, sumoylation with SUMO1, SUMO2 and SUMO3 promotes assembly of both mTORC1 and mTORC2 complexes.

Its subcellular location is the lysosome membrane. The protein resides in the cytoplasm. In terms of biological role, subunit of both mTORC1 and mTORC2, which regulates cell growth and survival in response to nutrient and hormonal signals. mTORC1 is activated in response to growth factors or amino acids. In response to nutrients, mTORC1 is recruited to the lysosome membrane and promotes protein, lipid and nucleotide synthesis by phosphorylating several substrates, such as ribosomal protein S6 kinase (RPS6KB1 and RPS6KB2) and EIF4EBP1 (4E-BP1). In the same time, it inhibits catabolic pathways by phosphorylating the autophagy initiation components ULK1 and ATG13, as well as transcription factor TFEB, a master regulators of lysosomal biogenesis and autophagy. The mTORC1 complex is inhibited in response to starvation and amino acid depletion. Within mTORC1, MLST8 interacts directly with MTOR and enhances its kinase activity. In nutrient-poor conditions, stabilizes the MTOR-RPTOR interaction and favors RPTOR-mediated inhibition of MTOR activity. As part of the mTORC2 complex, transduces signals from growth factors to pathways involved in proliferation, cytoskeletal organization, lipogenesis and anabolic output. mTORC2 is also activated by growth factors, but seems to be nutrient-insensitive. In response to growth factors, mTORC2 phosphorylates and activates AGC protein kinase family members, including AKT (AKT1, AKT2 and AKT3), PKC (PRKCA, PRKCB and PRKCE) and SGK1. mTORC2 functions upstream of Rho GTPases to regulate the actin cytoskeleton, probably by activating one or more Rho-type guanine nucleotide exchange factors. mTORC2 promotes the serum-induced formation of stress-fibers or F-actin. mTORC2 plays a critical role in AKT1 activation by mediating phosphorylation of different sites depending on the context, such as 'Thr-450', 'Ser-473', 'Ser-477' or 'Thr-479', facilitating the phosphorylation of the activation loop of AKT1 on 'Thr-308' by PDPK1/PDK1 which is a prerequisite for full activation. mTORC2 regulates the phosphorylation of SGK1 at 'Ser-422'. mTORC2 also modulates the phosphorylation of PRKCA on 'Ser-657'. Within mTORC2, MLST8 acts as a bridge between MAPKAP1/SIN1 and MTOR. This Bos taurus (Bovine) protein is Target of rapamycin complex subunit LST8.